The chain runs to 141 residues: Translation initiation factor 2 subunit beta (141 aa).

This sequence belongs to the eIF-2-beta/eIF-5 family. As to quaternary structure, heterotrimer composed of an alpha, a beta and a gamma chain.

Its function is as follows. eIF-2 functions in the early steps of protein synthesis by forming a ternary complex with GTP and initiator tRNA. The sequence is that of Translation initiation factor 2 subunit beta from Thermofilum pendens (strain DSM 2475 / Hrk 5).